The primary structure comprises 566 residues: Pyrophosphate--fructose 6-phosphate 1-phosphotransferase subunit beta 1 (566 aa).

Position 16 is a phosphoserine (S16). G105 lines the diphosphate pocket. Residue D199 participates in Mg(2+) binding. Residues 227-229, 266-267, 274-276, E335, and 440-443 each bind substrate; these read TID, KY, MGR, and YEGR. The active-site Proton acceptor is D229.

It belongs to the phosphofructokinase type A (PFKA) family. PPi-dependent PFK group II subfamily. Clade 'Long' sub-subfamily. Tetramer of two alpha (regulatory) and two beta (catalytic) chains. The cofactor is Mg(2+).

The protein resides in the cytoplasm. The catalysed reaction is beta-D-fructose 6-phosphate + diphosphate = beta-D-fructose 1,6-bisphosphate + phosphate + H(+). It participates in carbohydrate degradation; glycolysis; D-glyceraldehyde 3-phosphate and glycerone phosphate from D-glucose: step 3/4. Allosterically activated by fructose 2,6-bisphosphate. Its function is as follows. Catalytic subunit of pyrophosphate--fructose 6-phosphate 1-phosphotransferase. Catalyzes the phosphorylation of D-fructose 6-phosphate, the first committing step of glycolysis. Uses inorganic phosphate (PPi) as phosphoryl donor instead of ATP like common ATP-dependent phosphofructokinases (ATP-PFKs), which renders the reaction reversible, and can thus function both in glycolysis and gluconeogenesis. The polypeptide is Pyrophosphate--fructose 6-phosphate 1-phosphotransferase subunit beta 1 (Arabidopsis thaliana (Mouse-ear cress)).